Reading from the N-terminus, the 472-residue chain is Maintenance of mitochondrial morphology protein 1 (472 aa).

The Lumenal segment spans residues methionine 1–glycine 22. Residues phenylalanine 23–phenylalanine 43 traverse the membrane as a helical segment. At glycine 44 to glutamine 472 the chain is on the cytoplasmic side. Disordered regions lie at residues serine 51–serine 92, leucine 270–serine 303, and arginine 370–glutamine 472. A compositionally biased stretch (polar residues) spans serine 81–serine 92. The region spanning glutamine 124–proline 365 is the SMP-LTD domain. A compositionally biased stretch (pro residues) spans leucine 270 to proline 280. Low complexity predominate over residues threonine 281 to aspartate 297. Residues threonine 450–histidine 460 show a composition bias toward basic and acidic residues.

The protein belongs to the MMM1 family. As to quaternary structure, homodimer. Component of the ER-mitochondria encounter structure (ERMES) or MDM complex, composed of mmm1, mdm10, mdm12 and mdm34. A mmm1 homodimer associates with one molecule of mdm12 on each side in a pairwise head-to-tail manner, and the SMP-LTD domains of mmm1 and mdm12 generate a continuous hydrophobic tunnel for phospholipid trafficking.

The protein resides in the endoplasmic reticulum membrane. Its function is as follows. Component of the ERMES/MDM complex, which serves as a molecular tether to connect the endoplasmic reticulum (ER) and mitochondria. Components of this complex are involved in the control of mitochondrial shape and protein biogenesis, and function in nonvesicular lipid trafficking between the ER and mitochondria. The mdm12-mmm1 subcomplex functions in the major beta-barrel assembly pathway that is responsible for biogenesis of all outer membrane beta-barrel proteins, and acts in a late step after the SAM complex. The mdm10-mdm12-mmm1 subcomplex further acts in the TOM40-specific pathway after the action of the mdm12-mmm1 complex. Essential for establishing and maintaining the structure of mitochondria and maintenance of mtDNA nucleoids. The sequence is that of Maintenance of mitochondrial morphology protein 1 from Emericella nidulans (strain FGSC A4 / ATCC 38163 / CBS 112.46 / NRRL 194 / M139) (Aspergillus nidulans).